A 507-amino-acid chain; its full sequence is Probable lipid II flippase MurJ (507 aa).

The next 13 membrane-spanning stretches (helical) occupy residues 3–23 (LFRS…FGLV), 54–74 (IFAE…KMLI), 92–112 (LTLI…ILCI), 132–152 (ITIP…ILNS), 156–176 (FAAF…FTLI), 185–205 (ISIS…MFIC), 268–288 (IYQF…LPEM), 310–330 (IGLL…HPIT), 351–371 (ISAF…TPIF), 379–399 (TPLK…LLLM), 405–425 (IGIA…LYSY), 438–458 (IKLF…IIAL), and 472–492 (LLIK…IFFG).

Belongs to the MurJ/MviN family.

It is found in the cell inner membrane. The protein operates within cell wall biogenesis; peptidoglycan biosynthesis. In terms of biological role, involved in peptidoglycan biosynthesis. Transports lipid-linked peptidoglycan precursors from the inner to the outer leaflet of the cytoplasmic membrane. This chain is Probable lipid II flippase MurJ, found in Rickettsia prowazekii (strain Madrid E).